A 405-amino-acid polypeptide reads, in one-letter code: Cytoplasmic tRNA 2-thiolation protein 2 (405 aa).

The protein belongs to the CTU2/NCS2 family.

The protein resides in the cytoplasm. It functions in the pathway tRNA modification; 5-methoxycarbonylmethyl-2-thiouridine-tRNA biosynthesis. In terms of biological role, plays a central role in 2-thiolation of mcm(5)S(2)U at tRNA wobble positions of tRNA(Lys), tRNA(Glu) and tRNA(Gln). May act by forming a heterodimer with NCS6/CTU1 that ligates sulfur from thiocarboxylated URM1 onto the uridine of tRNAs at wobble position. This Drosophila persimilis (Fruit fly) protein is Cytoplasmic tRNA 2-thiolation protein 2.